The following is a 131-amino-acid chain: Heterochromatin silencing protein rss1 (131 aa).

In terms of assembly, monomer.

It localises to the cytoplasm. The protein resides in the nucleus. Its function is as follows. Required for heterochromatin silencing within pericentromeric repeats and at telomers. Facilitates the recruitment of Clr6 histone deacetylase (HDAC) by interacting with histones. Also interacts with Rad25, which mediates heterochromatin silencing in DNA repeats by recruiting the RITS complex. Together with Rad25, forms a regulatory hub that defines heterochromatin silencing within tandem repeats via linking RNAi and HDAC. This chain is Heterochromatin silencing protein rss1 (rss1), found in Schizosaccharomyces pombe (strain 972 / ATCC 24843) (Fission yeast).